Here is a 134-residue protein sequence, read N- to C-terminus: uncharacterized protein (134 aa).

This is an uncharacterized protein from Acanthamoeba polyphaga (Amoeba).